Consider the following 352-residue polypeptide: 4-hydroxy-3-methylbut-2-en-1-yl diphosphate synthase (flavodoxin) (352 aa).

[4Fe-4S] cluster contacts are provided by C262, C265, C297, and E304.

Belongs to the IspG family. It depends on [4Fe-4S] cluster as a cofactor.

The enzyme catalyses (2E)-4-hydroxy-3-methylbut-2-enyl diphosphate + oxidized [flavodoxin] + H2O + 2 H(+) = 2-C-methyl-D-erythritol 2,4-cyclic diphosphate + reduced [flavodoxin]. It participates in isoprenoid biosynthesis; isopentenyl diphosphate biosynthesis via DXP pathway; isopentenyl diphosphate from 1-deoxy-D-xylulose 5-phosphate: step 5/6. In terms of biological role, converts 2C-methyl-D-erythritol 2,4-cyclodiphosphate (ME-2,4cPP) into 1-hydroxy-2-methyl-2-(E)-butenyl 4-diphosphate. This Nitratiruptor sp. (strain SB155-2) protein is 4-hydroxy-3-methylbut-2-en-1-yl diphosphate synthase (flavodoxin).